The sequence spans 96 residues: CRISPR-associated endoribonuclease Cas2 (96 aa).

Asp8 lines the Mg(2+) pocket.

It belongs to the CRISPR-associated endoribonuclease Cas2 protein family. Homodimer, forms a heterotetramer with a Cas1 homodimer. Mg(2+) is required as a cofactor.

Functionally, CRISPR (clustered regularly interspaced short palindromic repeat), is an adaptive immune system that provides protection against mobile genetic elements (viruses, transposable elements and conjugative plasmids). CRISPR clusters contain sequences complementary to antecedent mobile elements and target invading nucleic acids. CRISPR clusters are transcribed and processed into CRISPR RNA (crRNA). Functions as a ssRNA-specific endoribonuclease. Involved in the integration of spacer DNA into the CRISPR cassette. This chain is CRISPR-associated endoribonuclease Cas2, found in Chlorobaculum tepidum (strain ATCC 49652 / DSM 12025 / NBRC 103806 / TLS) (Chlorobium tepidum).